The primary structure comprises 433 residues: Tol-Pal system protein TolB (433 aa).

An N-terminal signal peptide occupies residues 1–21 (MINLFRGLLVVLCFASAMVSA).

Belongs to the TolB family. In terms of assembly, the Tol-Pal system is composed of five core proteins: the inner membrane proteins TolA, TolQ and TolR, the periplasmic protein TolB and the outer membrane protein Pal. They form a network linking the inner and outer membranes and the peptidoglycan layer.

Its subcellular location is the periplasm. Its function is as follows. Part of the Tol-Pal system, which plays a role in outer membrane invagination during cell division and is important for maintaining outer membrane integrity. The chain is Tol-Pal system protein TolB from Pseudomonas syringae pv. syringae (strain B728a).